The following is a 316-amino-acid chain: Olfactory receptor 51J1 (316 aa).

Over 1–31 (MKISNNSLGFLPTTFILVGIPGLESEHLWIS) the chain is Extracellular. Residue Asn5 is glycosylated (N-linked (GlcNAc...) asparagine). The chain crosses the membrane as a helical span at residues 32–52 (VPFSLIYIIIFLGNGIILHVI). At 53–63 (RTDIALHQPMY) the chain is on the cytoplasmic side. A helical transmembrane segment spans residues 64-84 (LFLAMLALAEVRVSASTLPTV). Residues 85-104 (LGIFLFGNTEISLEACLFPD) are Extracellular-facing. An intrachain disulfide couples Cys100 to Cys191. A helical transmembrane segment spans residues 105-125 (VLHPFFIHDGASCAAGHVFGP). The Cytoplasmic segment spans residues 126–161 (LYSHLQPTELHSYPDTAQGLWHRSYYRTEKHYAHGS). Residues 162-182 (VAHSLMASALLWPQCPLTFLL) traverse the membrane as a helical segment. Over 183–191 (SAPQSYLSC) the chain is Extracellular. Residues 192 to 212 (GNISVNNIYGIFIVTSTFGLD) form a helical membrane-spanning segment. The Cytoplasmic segment spans residues 213-242 (SLLIVISYGLILHTVLGIATGEGRKKALNT). A helical membrane pass occupies residues 243–263 (CGSHVCAVLAYYVPMIGLSIV). The Extracellular portion of the chain corresponds to 264-275 (HRLGHRVSPLLQ). Residues 276–296 (AMMANAYLFFPPVVNPIVYSI) form a helical membrane-spanning segment. Over 297–316 (KTKEIHGAIVRMLLEKRRRV) the chain is Cytoplasmic.

It belongs to the G-protein coupled receptor 1 family.

It is found in the cell membrane. Its function is as follows. Odorant receptor. In Homo sapiens (Human), this protein is Olfactory receptor 51J1 (OR51J1).